The following is a 418-amino-acid chain: Type II methyltransferase M.MspI (418 aa).

An SAM-dependent MTase C5-type domain is found at 105 to 404 (FKFIDLFSGI…EQISLALKTV (300 aa)). The active site involves cysteine 174.

Belongs to the class I-like SAM-binding methyltransferase superfamily. C5-methyltransferase family.

It catalyses the reaction a 2'-deoxycytidine in DNA + S-adenosyl-L-methionine = a 5-methyl-2'-deoxycytidine in DNA + S-adenosyl-L-homocysteine + H(+). In terms of biological role, a methylase, recognizes the double-stranded sequence 5'-CCGG-3', methylates C-1 on both strands, and protects the DNA from cleavage by the MspI endonuclease. This chain is Type II methyltransferase M.MspI (mspIM), found in Moraxella sp.